A 510-amino-acid polypeptide reads, in one-letter code: Fumarate hydratase, mitochondrial (510 aa).

The transit peptide at 1–44 (MYRALRLLARSRPLVRAPAAALASAPGLGGAAVPSFWPPNAARM) directs the protein to the mitochondrion. 3 positions are modified to N6-acetyllysine; alternate: lysine 61, lysine 66, and lysine 80. Residues lysine 61, lysine 66, and lysine 80 each carry the N6-succinyllysine; alternate modification. Residues threonine 85 and threonine 90 each carry the phosphothreonine modification. Lysine 94 carries the N6-acetyllysine modification. 2 positions are modified to N6-acetyllysine; alternate: lysine 115 and lysine 122. N6-succinyllysine; alternate is present on residues lysine 115 and lysine 122. Substrate is bound by residues 145-147 (SGT), 176-179 (HPND), and 186-188 (SSN). Lysine 213 is subject to N6-acetyllysine. An N6-acetyllysine; alternate modification is found at lysine 223. Lysine 223 bears the N6-succinyllysine; alternate mark. Threonine 234 lines the substrate pocket. The active-site Proton donor/acceptor is histidine 235. Phosphothreonine; by PRKDC is present on threonine 236. The residue at position 256 (lysine 256) is an N6-acetyllysine. An N6-acetyllysine; alternate modification is found at lysine 292. Lysine 292 carries the post-translational modification N6-succinyllysine; alternate. Serine 365 is a catalytic residue. Substrate-binding positions include serine 366 and 371 to 373 (KVN). Serine 366 bears the Phosphoserine mark. N6-succinyllysine occurs at positions 467 and 473. Lysine 502 bears the N6-acetyllysine mark.

It belongs to the class-II fumarase/aspartase family. Fumarase subfamily. In terms of assembly, homotetramer. Interacts with H2AZ1. Phosphorylation at Thr-236 by PRKDC in response to DNA damage promotes translocation to the nucleus and recruitment to DNA double-strand breaks (DSBs). In terms of tissue distribution, expressed in red blood cells; underexpressed in red blood cells (cytoplasm) of patients with hereditary non-spherocytic hemolytic anemia of unknown etiology.

It localises to the mitochondrion. Its subcellular location is the cytoplasm. The protein localises to the cytosol. The protein resides in the nucleus. It is found in the chromosome. The catalysed reaction is (S)-malate = fumarate + H2O. Its pathway is carbohydrate metabolism; tricarboxylic acid cycle; (S)-malate from fumarate: step 1/1. Functionally, catalyzes the reversible stereospecific interconversion of fumarate to L-malate. Experiments in other species have demonstrated that specific isoforms of this protein act in defined pathways and favor one direction over the other. In terms of biological role, catalyzes the hydration of fumarate to L-malate in the tricarboxylic acid (TCA) cycle to facilitate a transition step in the production of energy in the form of NADH. Catalyzes the dehydration of L-malate to fumarate. Fumarate metabolism in the cytosol plays a role during urea cycle and arginine metabolism; fumarate being a by-product of the urea cycle and amino-acid catabolism. Also plays a role in DNA repair by promoting non-homologous end-joining (NHEJ). In response to DNA damage and phosphorylation by PRKDC, translocates to the nucleus and accumulates at DNA double-strand breaks (DSBs): acts by catalyzing formation of fumarate, an inhibitor of KDM2B histone demethylase activity, resulting in enhanced dimethylation of histone H3 'Lys-36' (H3K36me2). The chain is Fumarate hydratase, mitochondrial from Homo sapiens (Human).